Reading from the N-terminus, the 189-residue chain is HGPRTase-like protein (189 aa).

It belongs to the purine/pyrimidine phosphoribosyltransferase family. Archaeal HPRT subfamily.

Its function is as follows. May catalyze a purine salvage reaction, the substrate is unknown. The protein is HGPRTase-like protein of Halomicrobium mukohataei (strain ATCC 700874 / DSM 12286 / JCM 9738 / NCIMB 13541) (Haloarcula mukohataei).